Consider the following 440-residue polypeptide: Protein disulfide-isomerase 5-2 (440 aa).

The first 23 residues, 1–23 (MRSLKLLLCWISFLTLSISISAS), serve as a signal peptide directing secretion. Residues 24 to 139 (SDDQFTLDGT…LVRYLKKFVA (116 aa)) form the Thioredoxin domain. Active-site nucleophile residues include Cys-61 and Cys-64. Cys-61 and Cys-64 are disulfide-bonded. Thr-160 carries the phosphothreonine modification. The N-linked (GlcNAc...) asparagine glycan is linked to Asn-171. The helical transmembrane segment at 376 to 396 (SMIGIRSVYILVFLVAVIMML) threads the bilayer. Residues 406-440 (TGVRTATAVRERVDQATTVPEDESSEHKPSDKKED) form a disordered region. Positions 430-440 (SEHKPSDKKED) are enriched in basic and acidic residues.

Belongs to the protein disulfide isomerase family. As to expression, widely expressed.

It localises to the membrane. Acts as a protein-folding catalyst that interacts with nascent polypeptides to catalyze the formation, isomerization, and reduction or oxidation of disulfide bonds. This Arabidopsis thaliana (Mouse-ear cress) protein is Protein disulfide-isomerase 5-2 (PDIL5-2).